The following is a 452-amino-acid chain: Transcription factor AP-2-delta (452 aa).

A Phosphoserine; by PKA modification is found at Ser-239. The H-S-H (helix-span-helix), dimerization stretch occupies residues Arg-280–Glu-410. The tract at residues Lys-416 to Asp-452 is disordered. Basic and acidic residues predominate over residues Asn-429–Asp-452.

Belongs to the AP-2 family. As to quaternary structure, binds DNA as a dimer. Can form homodimers or heterodimers with other AP-2 family members. As to expression, expressed in both embryonic and newborn brain.

It is found in the nucleus. In terms of biological role, sequence-specific DNA-binding protein that interacts with inducible viral and cellular enhancer elements to regulate transcription of selected genes. AP-2 factors bind to the consensus sequence 5'-GCCNNNGGC-3' and activate genes involved in a large spectrum of important biological functions including proper eye, face, body wall, limb and neural tube development. They also suppress a number of genes including MCAM/MUC18, C/EBP alpha and MYC. This is Transcription factor AP-2-delta (Tfap2d) from Mus musculus (Mouse).